The chain runs to 288 residues: UDP-3-O-acyl-N-acetylglucosamine deacetylase (288 aa).

Positions 79, 236, and 240 each coordinate Zn(2+). The active-site Proton donor is His-263.

This sequence belongs to the LpxC family. Zn(2+) is required as a cofactor.

The catalysed reaction is a UDP-3-O-[(3R)-3-hydroxyacyl]-N-acetyl-alpha-D-glucosamine + H2O = a UDP-3-O-[(3R)-3-hydroxyacyl]-alpha-D-glucosamine + acetate. It functions in the pathway glycolipid biosynthesis; lipid IV(A) biosynthesis; lipid IV(A) from (3R)-3-hydroxytetradecanoyl-[acyl-carrier-protein] and UDP-N-acetyl-alpha-D-glucosamine: step 2/6. Functionally, catalyzes the hydrolysis of UDP-3-O-myristoyl-N-acetylglucosamine to form UDP-3-O-myristoylglucosamine and acetate, the committed step in lipid A biosynthesis. The sequence is that of UDP-3-O-acyl-N-acetylglucosamine deacetylase from Rickettsia africae (strain ESF-5).